Here is an 826-residue protein sequence, read N- to C-terminus: E3 ubiquitin-protein ligase SH3RF1 (826 aa).

The segment at 12–53 (CPVCLERLDASAKVLPCQHTFCKRCLLGIVSSRKELRCPECR) adopts an RING-type zinc-finger fold. Residues 80–130 (PRKAGDGGSAGNSTNALRAQGSVTTNGGLNDAQNTQSGQQRIQARSPPVRG) are disordered. The span at 90–122 (GNSTNALRAQGSVTTNGGLNDAQNTQSGQQRIQ) shows a compositional bias: polar residues. 2 SH3 domains span residues 132–191 (PQLP…IIKP) and 194–257 (QPPP…FNSA). Positions 266-319 (KPSGADTGEGSSGTSHSGNSQKQADAKKNTKKRHSFTSLTMSNKSSQSVQNRHS) are disordered. A compositionally biased stretch (low complexity) spans 273–285 (GEGSSGTSHSGNS). Residues 301–317 (FTSLTMSNKSSQSVQNR) are compositionally biased toward polar residues. Residues 398–459 (ARPSVFIAIY…PGNYVAPVTR (62 aa)) enclose the SH3 3 domain. Disordered stretches follow at residues 647–694 (NSAA…QTNS) and 725–759 (DSVS…CSSL). Positions 652 to 663 (KQDKDSKKEKKG) are enriched in basic and acidic residues. Residues 767-826 (RPCERYRVMVSYPPQSEAELELKEGDIVFVHKKREDGWFKGTLQRNGKTGLFPGSFVENI) form the SH3 4 domain.

It belongs to the SH3RF family. Post-translationally, autoubiquitinated. Ubiquitinated by SH3RF2, leading to proteasome-mediated degradation.

The protein resides in the cytoplasm. Its subcellular location is the perinuclear region. It is found in the cell projection. The protein localises to the lamellipodium. It localises to the golgi apparatus. The protein resides in the trans-Golgi network. It carries out the reaction S-ubiquitinyl-[E2 ubiquitin-conjugating enzyme]-L-cysteine + [acceptor protein]-L-lysine = [E2 ubiquitin-conjugating enzyme]-L-cysteine + N(6)-ubiquitinyl-[acceptor protein]-L-lysine.. The protein operates within protein modification; protein ubiquitination. Functionally, has E3 ubiquitin-protein ligase activity. In the absence of an external substrate, it can catalyze self-ubiquitination. Acts as a scaffold protein that contributes to the effective activation of the JNK signaling pathway. Plays an essential role in the anterior neural development. In Xenopus laevis (African clawed frog), this protein is E3 ubiquitin-protein ligase SH3RF1 (sh3rf1).